The following is a 637-amino-acid chain: MATAPASHAFRTEVRKMLHIITHSLYTNREIFLRELVSNASDALDKLRFIRSRGDAVVAPDLAPGIDISVDKEARILTIADTGVGMTRQELMDNLGTIARSGSEQFVADLAAAENAKDADAASIIGRFGVGFYAVFMVADRVEVTSRSYIEGEAAHTWTSDGLGEFTVEEATGDIPQRGTVIKAHLREDAAEFLEKYRIEGILRKHSQFISFPIRVDGEQVNTTPALWREPKFSITDEQYADFYKHLTFDTEAPLRTLHVSVDAPVQFTGLVFVPPHGQEVFSMGRDRWGLDLYVRRVLIQRENKDLLPEYLGFLKGIVDTEDLPLNISRETLQENVVVRKIGQTLTKQVLADLARLAADDAEAYATFWRQHGKVFKLGYSDYANREKFAPLLRFNSSHHDDAQGLTSLDDYISRAREGQKEIWYIAAPGREAARLDPRVEVFRRKGLEVLYLLEPIDEFVLETLDSYSDFSFKAVEHADGEKLAQFEDTGPARDVTPLTEDEDAAFARLIERMKALLGDAVEDVRISHRLADSPACLVQPGGASTSSMDRLLRVLHKDESVPRKVFEVNRDHPILRNLLKVFTSDASDPLVEDTTRQLFATSLMLDGYLKDPHELAAMMHRLMEKSGDWYKAVRGL.

The interval 1–330 is a; substrate-binding; it reads MATAPASHAF…TEDLPLNISR (330 aa). Positions 331 to 551 are b; that stretch reads ETLQENVVVR…GGASTSSMDR (221 aa). The segment at 552–637 is c; that stretch reads LLRVLHKDES…GDWYKAVRGL (86 aa).

The protein belongs to the heat shock protein 90 family. In terms of assembly, homodimer.

Its subcellular location is the cytoplasm. Its function is as follows. Molecular chaperone. Has ATPase activity. This chain is Chaperone protein HtpG, found in Nitratidesulfovibrio vulgaris (strain ATCC 29579 / DSM 644 / CCUG 34227 / NCIMB 8303 / VKM B-1760 / Hildenborough) (Desulfovibrio vulgaris).